The sequence spans 387 residues: MNIHEYQAKEILSTYGIPVPRNRVALTADQVERAAKMMGGHCVVKAQIYAGGRGKAGGVKLVHHPEQASDVAKELFGKRLVTKQTGPEGLKVRRILVEETVEIAREFYLSITLDRETSRYCLIASAEGGMDIEEVAQKSPDKIHVLTIDPFTGLRTYQARKIALALGLSGAVCEDCVELILNTYKCCLEKDCSLIEINPLVVTRAGWLLAMDAKISFDDNAVYRHREYPDMVDYSQLDPLEITAGKYDLAYIKLTGNIGCMVNGAGLAMATLDVLKEFGGEPANFLDVGGGATREKVAEAFKIILQDSDVKAVFVNIFGGIMRCDVIAQGIIEAANEVHCPLPIVVRMDGSNVEDGKKLLLESGLNVQIGDNLGDGAQKIVAMLAKA.

The 235-residue stretch at 9 to 243 folds into the ATP-grasp domain; it reads KEILSTYGIP…YSQLDPLEIT (235 aa). ATP-binding positions include lysine 45, 52–54, glutamate 98, valine 101, and glutamate 106; that span reads GRG. Positions 198 and 212 each coordinate Mg(2+). Substrate contacts are provided by residues asparagine 263 and 320 to 322; that span reads GIM.

The protein belongs to the succinate/malate CoA ligase beta subunit family. Heterotetramer of two alpha and two beta subunits. Mg(2+) is required as a cofactor.

It carries out the reaction succinate + ATP + CoA = succinyl-CoA + ADP + phosphate. The enzyme catalyses GTP + succinate + CoA = succinyl-CoA + GDP + phosphate. It functions in the pathway carbohydrate metabolism; tricarboxylic acid cycle; succinate from succinyl-CoA (ligase route): step 1/1. Its function is as follows. Succinyl-CoA synthetase functions in the citric acid cycle (TCA), coupling the hydrolysis of succinyl-CoA to the synthesis of either ATP or GTP and thus represents the only step of substrate-level phosphorylation in the TCA. The beta subunit provides nucleotide specificity of the enzyme and binds the substrate succinate, while the binding sites for coenzyme A and phosphate are found in the alpha subunit. The chain is Succinate--CoA ligase [ADP-forming] subunit beta from Trichlorobacter lovleyi (strain ATCC BAA-1151 / DSM 17278 / SZ) (Geobacter lovleyi).